Reading from the N-terminus, the 282-residue chain is Bifunctional protein FolD (282 aa).

NADP(+) contacts are provided by residues 165 to 167 (NRS), serine 190, and isoleucine 231.

It belongs to the tetrahydrofolate dehydrogenase/cyclohydrolase family. As to quaternary structure, homodimer.

It catalyses the reaction (6R)-5,10-methylene-5,6,7,8-tetrahydrofolate + NADP(+) = (6R)-5,10-methenyltetrahydrofolate + NADPH. The enzyme catalyses (6R)-5,10-methenyltetrahydrofolate + H2O = (6R)-10-formyltetrahydrofolate + H(+). Its pathway is one-carbon metabolism; tetrahydrofolate interconversion. Catalyzes the oxidation of 5,10-methylenetetrahydrofolate to 5,10-methenyltetrahydrofolate and then the hydrolysis of 5,10-methenyltetrahydrofolate to 10-formyltetrahydrofolate. This is Bifunctional protein FolD from Clostridium botulinum (strain ATCC 19397 / Type A).